Reading from the N-terminus, the 203-residue chain is Guanylate kinase (203 aa).

Residues 3 to 181 (GTLYIVAAPS…AVSEMCAIFT (179 aa)) form the Guanylate kinase-like domain. ATP is bound at residue 10-17 (APSGAGKS).

It belongs to the guanylate kinase family.

It is found in the cytoplasm. It carries out the reaction GMP + ATP = GDP + ADP. Essential for recycling GMP and indirectly, cGMP. The sequence is that of Guanylate kinase from Xanthomonas axonopodis pv. citri (strain 306).